We begin with the raw amino-acid sequence, 301 residues long: Homoserine O-acetyltransferase (301 aa).

Residue Cys142 is the Acyl-thioester intermediate of the active site. Substrate contacts are provided by Lys163 and Ser192. His235 serves as the catalytic Proton acceptor. Residue Glu237 is part of the active site. Arg249 contributes to the substrate binding site.

It belongs to the MetA family.

The protein resides in the cytoplasm. The enzyme catalyses L-homoserine + acetyl-CoA = O-acetyl-L-homoserine + CoA. It functions in the pathway amino-acid biosynthesis; L-methionine biosynthesis via de novo pathway; O-acetyl-L-homoserine from L-homoserine: step 1/1. Transfers an acetyl group from acetyl-CoA to L-homoserine, forming acetyl-L-homoserine. The sequence is that of Homoserine O-acetyltransferase from Bacillus cytotoxicus (strain DSM 22905 / CIP 110041 / 391-98 / NVH 391-98).